A 226-amino-acid chain; its full sequence is Triosephosphate isomerase (226 aa).

10-12 (NFK) lines the substrate pocket. His-96 (electrophile) is an active-site residue. Glu-144 (proton acceptor) is an active-site residue. Substrate-binding positions include Ile-149, Gly-184, and 205–206 (AS).

Belongs to the triosephosphate isomerase family. As to quaternary structure, homotetramer; dimer of dimers.

Its subcellular location is the cytoplasm. It catalyses the reaction D-glyceraldehyde 3-phosphate = dihydroxyacetone phosphate. It participates in carbohydrate biosynthesis; gluconeogenesis. The protein operates within carbohydrate degradation; glycolysis; D-glyceraldehyde 3-phosphate from glycerone phosphate: step 1/1. Functionally, involved in the gluconeogenesis. Catalyzes stereospecifically the conversion of dihydroxyacetone phosphate (DHAP) to D-glyceraldehyde-3-phosphate (G3P). This is Triosephosphate isomerase from Methanopyrus kandleri (strain AV19 / DSM 6324 / JCM 9639 / NBRC 100938).